The primary structure comprises 487 residues: GTPase Der (487 aa).

EngA-type G domains are found at residues 3–166 and 201–374; these read PVIA…IAEL and VKLA…ESAT. GTP is bound by residues 9 to 16, 56 to 60, 118 to 121, 207 to 214, 254 to 258, and 319 to 322; these read GRPNVGKS, DTGGI, NKTD, DTAGV, and NKWD. A KH-like domain is found at 375–459; sequence KRISTAMLRR…PIKIEFREGD (85 aa).

This sequence belongs to the TRAFAC class TrmE-Era-EngA-EngB-Septin-like GTPase superfamily. EngA (Der) GTPase family. In terms of assembly, associates with the 50S ribosomal subunit.

In terms of biological role, GTPase that plays an essential role in the late steps of ribosome biogenesis. This chain is GTPase Der, found in Pseudoalteromonas translucida (strain TAC 125).